A 137-amino-acid chain; its full sequence is Large ribosomal subunit protein uL22 (137 aa).

The protein belongs to the universal ribosomal protein uL22 family. Part of the 50S ribosomal subunit.

In terms of biological role, this protein binds specifically to 23S rRNA; its binding is stimulated by other ribosomal proteins, e.g. L4, L17, and L20. It is important during the early stages of 50S assembly. It makes multiple contacts with different domains of the 23S rRNA in the assembled 50S subunit and ribosome. Functionally, the globular domain of the protein is located near the polypeptide exit tunnel on the outside of the subunit, while an extended beta-hairpin is found that lines the wall of the exit tunnel in the center of the 70S ribosome. In Flavobacterium psychrophilum (strain ATCC 49511 / DSM 21280 / CIP 103535 / JIP02/86), this protein is Large ribosomal subunit protein uL22.